The chain runs to 438 residues: Battenin (438 aa).

Residues 1 to 27 (MGSSAGSWRRLEDSEREETDSEPQAPR) are disordered. Residues 1 to 37 (MGSSAGSWRRLEDSEREETDSEPQAPRLDSRSVLWKN) lie on the Cytoplasmic side of the membrane. Residue serine 14 is modified to Phosphoserine. A helical transmembrane segment spans residues 38-58 (AVGFWILGLCNNFSYVVMLSA). Topologically, residues 59–127 (AHDILKQEQA…GLHLLPYSPR (69 aa)) are lumenal. Residues 67–87 (QASGNQSHVEPGPTPTPHNSS) form a disordered region. 2 N-linked (GlcNAc...) asparagine glycosylation sites follow: asparagine 71 and asparagine 85. The helical transmembrane segment at 128-148 (VLVSGVCSAGSFVLVAFSQSV) threads the bilayer. The Cytoplasmic segment spans residues 149 to 151 (GLS). The helical transmembrane segment at 152-172 (LCGVVLASISSGLGEVTFLSL) threads the bilayer. Residues 173-182 (TAFYPSAVIS) are Lumenal-facing. A helical membrane pass occupies residues 183–203 (WWSSGTGGAGLLGSLSYLGLT). The Cytoplasmic portion of the chain corresponds to 204–277 (QAGLSPQHTL…DLSLQERWTV (74 aa)). The disordered stretch occupies residues 239–261 (PGGENEAETAARQPLIGTETPES). The Lysosomal targeting motif motif lies at 242 to 244 (ENE). The Lysosomal targeting motif. Required for AP1G1, AP2A2 and AP3D1 interaction signature appears at 253–254 (LI). The helical transmembrane segment at 278–298 (FKGLLWYIIPLVLVYFAEYFI) threads the bilayer. Topologically, residues 299–346 (NQGLFELLFFRNTSLSHAQQYRWYQMLYQAGVFASRSSLQCCRIRFTW) are lumenal. Asparagine 310 carries an N-linked (GlcNAc...) asparagine glycan. A helical transmembrane segment spans residues 347 to 367 (VLALLQCLNLALLLADVCLNF). Residues 368–438 (LPSIYLIFII…PLHDFLCHLP (71 aa)) are Cytoplasmic-facing. Residues 409 to 419 (MEAACISDTLG) carry the Lysosomal targeting motif motif. Cysteine 435 is subject to Cysteine methyl ester. Cysteine 435 carries the S-farnesyl cysteine lipid modification. The propeptide at 436-438 (HLP) is removed in mature form.

This sequence belongs to the battenin family. As to quaternary structure, homooligomer. Interacts with DCTN1, KIF3A, RAB7A and RILP. Interacts with CLN5. Interacts with KCNIP3. In terms of processing, highly glycosylated. Farnesylation is important for trafficking to lysosomes. Expressed throughout the brain, such as, in the cerebral cortex, hippocampus, cerebellum and several different cerebral nuclei (at protein level). In the cerebral cortex, expressed in all cortical layers. In the hippocampus, expressed in the granule cells in the dentate gyrus and the pyramidal cells of the hippocampus proper. In the cerebellum expressed in the granular and molecular layers, and in the Purkinje cell layer.

The protein resides in the lysosome membrane. Its subcellular location is the late endosome. It localises to the lysosome. It is found in the membrane raft. The protein localises to the golgi apparatus. The protein resides in the trans-Golgi network. Its subcellular location is the synapse. It localises to the synaptosome. It is found in the early endosome membrane. The protein localises to the late endosome membrane. The protein resides in the cytoplasmic vesicle. Its subcellular location is the autophagosome. Mediates microtubule-dependent, anterograde transport connecting the Golgi network, endosomes, autophagosomes, lysosomes and plasma membrane, and participates in several cellular processes such as regulation of lysosomal pH, lysosome protein degradation, receptor-mediated endocytosis, autophagy, transport of proteins and lipids from the TGN, apoptosis and synaptic transmission. Facilitates the proteins transport from trans-Golgi network (TGN)-to other membrane compartments such as transport of microdomain-associated proteins to the plasma membrane, IGF2R transport to the lysosome where it regulates the CTSD release leading to regulation of CTSD maturation and thereby APP intracellular processing. Moreover regulates CTSD activity in response to osmotic stress. Also binds galactosylceramide and transports it from the trans Golgi to the rafts, which may have immediate and downstream effects on cell survival by modulating ceramide synthesis. At the plasma membrane, regulates actin-dependent events including filopodia formation, cell migration, and pinocytosis through ARF1-CDC42 pathway and also the cytoskeleton organization through interaction with MYH10 and fodrin leading to the regulation of the plasma membrane association of Na+, K+ ATPase complex. Regulates synaptic transmission in the amygdala, hippocampus, and cerebellum through regulation of synaptic vesicles density and their proximity to active zones leading to modulation of short-term plasticity and age-dependent anxious behavior, learning and memory. Regulates autophagic vacuoles (AVs) maturation by modulating the trafficking between endocytic and autophagolysosomal/lysosomal compartments, which involves vesicle fusion leading to regulation of degradation process. Also participates in cellular homeostasis of compounds such as, water, ions, amino acids, proteins and lipids in several tissue namely in brain and kidney through regulation of their transport and synthesis. This is Battenin from Mus musculus (Mouse).